A 163-amino-acid polypeptide reads, in one-letter code: Nucleotide-binding protein Noca_0564 (163 aa).

The protein belongs to the YajQ family.

Functionally, nucleotide-binding protein. The chain is Nucleotide-binding protein Noca_0564 from Nocardioides sp. (strain ATCC BAA-499 / JS614).